Consider the following 74-residue polypeptide: Protein krueppel (74 aa).

C2H2-type zinc fingers lie at residues 1-4, 10-32, 38-60, and 66-74; these read ERTH, FECP…MRLH, YHCS…LRVH, and YACELCAAK.

This sequence belongs to the krueppel C2H2-type zinc-finger protein family.

Its subcellular location is the nucleus. Its function is as follows. Krueppel is a gap class segmentation protein. The protein is Protein krueppel (Kr) of Apis mellifera (Honeybee).